The following is a 422-amino-acid chain: Dihydroorotase (422 aa).

Zn(2+)-binding residues include His-59 and His-61. Residues 61–63 (HFR) and Asn-93 each bind substrate. Residues Asp-150, His-177, and His-230 each contribute to the Zn(2+) site. A substrate-binding site is contributed by Asn-276. Residue Asp-303 coordinates Zn(2+). The active site involves Asp-303. A substrate-binding site is contributed by His-307.

Belongs to the metallo-dependent hydrolases superfamily. DHOase family. Class I DHOase subfamily. Requires Zn(2+) as cofactor.

It catalyses the reaction (S)-dihydroorotate + H2O = N-carbamoyl-L-aspartate + H(+). It participates in pyrimidine metabolism; UMP biosynthesis via de novo pathway; (S)-dihydroorotate from bicarbonate: step 3/3. Catalyzes the reversible cyclization of carbamoyl aspartate to dihydroorotate. In Streptococcus thermophilus (strain CNRZ 1066), this protein is Dihydroorotase.